A 256-amino-acid polypeptide reads, in one-letter code: MLLMAVDIGNTNVVIGFIDDGRIAGTYRITTKANHTSDEYGLMITQFLALSGYKPADVDDVIISSVVPKVMHSFRASIVKFLDIDPMIVGPGIKTGLNIRMDNPQNMGADCIADCAGAYYEYGGPILVADFGTATTFNYVTADASVISGLITTGIRTAAAALWEGTAQLPEVEITRPKSILAKSTKPAMQAGLYYNFLGGIERTIAQFHKEIDEDFRVVATGGLSRVFADGTNMIDIYDPDLIFKGMWHIYDRNVR.

7–14 is a binding site for ATP; sequence DIGNTNVV. 108–111 provides a ligand contact to substrate; that stretch reads GADC. The active-site Proton acceptor is Asp-110. Residue Asp-130 participates in K(+) binding. ATP is bound at residue Thr-133. A substrate-binding site is contributed by Thr-185.

It belongs to the type III pantothenate kinase family. In terms of assembly, homodimer. It depends on NH4(+) as a cofactor. Requires K(+) as cofactor.

The protein localises to the cytoplasm. The enzyme catalyses (R)-pantothenate + ATP = (R)-4'-phosphopantothenate + ADP + H(+). The protein operates within cofactor biosynthesis; coenzyme A biosynthesis; CoA from (R)-pantothenate: step 1/5. Catalyzes the phosphorylation of pantothenate (Pan), the first step in CoA biosynthesis. This chain is Type III pantothenate kinase, found in Bifidobacterium adolescentis (strain ATCC 15703 / DSM 20083 / NCTC 11814 / E194a).